A 661-amino-acid chain; its full sequence is UvrABC system protein C (661 aa).

In terms of domain architecture, GIY-YIG spans 26 to 105 (AEPGCYLMRD…IKNHQPHFNV (80 aa)). The UVR domain occupies 215–250 (DELQNLLQEQMHKYADRTDYESAARVRDQLQGLDQL).

The protein belongs to the UvrC family. Interacts with UvrB in an incision complex.

Its subcellular location is the cytoplasm. Functionally, the UvrABC repair system catalyzes the recognition and processing of DNA lesions. UvrC both incises the 5' and 3' sides of the lesion. The N-terminal half is responsible for the 3' incision and the C-terminal half is responsible for the 5' incision. This is UvrABC system protein C from Synechococcus sp. (strain CC9902).